Consider the following 60-residue polypeptide: Large ribosomal subunit protein bL32 (60 aa).

Residues 1–60 (MAVQQNKKTPSKRGMHRSHDFLVAPQLSVEPTTGETHMRHHISPNGFYRGRKVLKTKNDE) form a disordered region. The span at 49–60 (RGRKVLKTKNDE) shows a compositional bias: basic residues.

This sequence belongs to the bacterial ribosomal protein bL32 family.

The protein is Large ribosomal subunit protein bL32 of Janthinobacterium sp. (strain Marseille) (Minibacterium massiliensis).